The chain runs to 143 residues: Transcriptional regulator MraZ (143 aa).

2 SpoVT-AbrB domains span residues 5-47 and 76-119; these read EYNH…SMDE and ATEC…SSDQ.

The protein belongs to the MraZ family. In terms of assembly, forms oligomers.

The protein localises to the cytoplasm. It is found in the nucleoid. This Alkaliphilus metalliredigens (strain QYMF) protein is Transcriptional regulator MraZ.